Consider the following 557-residue polypeptide: Intraflagellar transport protein 56 (557 aa).

Residues 1 to 30 (MLLSRMKPAVGGEASTSSNEKKRKNKSKKI) form a disordered region. A compositionally biased stretch (basic residues) spans 21–30 (KKRKNKSKKI). 4 TPR repeats span residues 60 to 93 (EHAD…PDCP), 95 to 128 (DVWV…LQNR), 154 to 187 (TEDQ…NREF), and 471 to 504 (ANDC…EGKR).

This sequence belongs to the IFT56 family. As to quaternary structure, component of the IFT complex B.

The protein localises to the cell projection. The protein resides in the cilium. Functionally, component of the intraflagellar transport (IFT) complex B required for transport of proteins in the motile cilium. Required for transport of specific ciliary cargo proteins related to motility, while it is neither required for IFT complex B assembly or motion nor for cilium assembly. Plays a key role in maintaining the integrity of the IFT complex B and the proper ciliary localization of the IFT complex B components. Essential for maintaining proper microtubule organization within the ciliary axoneme. This chain is Intraflagellar transport protein 56, found in Danio rerio (Zebrafish).